A 148-amino-acid chain; its full sequence is SsrA-binding protein (148 aa).

Residues E129–R142 are compositionally biased toward basic and acidic residues. Residues E129–T148 form a disordered region.

It belongs to the SmpB family.

Its subcellular location is the cytoplasm. In terms of biological role, required for rescue of stalled ribosomes mediated by trans-translation. Binds to transfer-messenger RNA (tmRNA), required for stable association of tmRNA with ribosomes. tmRNA and SmpB together mimic tRNA shape, replacing the anticodon stem-loop with SmpB. tmRNA is encoded by the ssrA gene; the 2 termini fold to resemble tRNA(Ala) and it encodes a 'tag peptide', a short internal open reading frame. During trans-translation Ala-aminoacylated tmRNA acts like a tRNA, entering the A-site of stalled ribosomes, displacing the stalled mRNA. The ribosome then switches to translate the ORF on the tmRNA; the nascent peptide is terminated with the 'tag peptide' encoded by the tmRNA and targeted for degradation. The ribosome is freed to recommence translation, which seems to be the essential function of trans-translation. This chain is SsrA-binding protein, found in Burkholderia lata (strain ATCC 17760 / DSM 23089 / LMG 22485 / NCIMB 9086 / R18194 / 383).